The primary structure comprises 237 residues: uncharacterized protein (237 aa).

Helical transmembrane passes span 19 to 39, 51 to 71, 81 to 101, 106 to 126, 136 to 156, 159 to 179, and 209 to 229; these read ILNGIWLITALGLVATAGLAW, YDSPPMYVAIGLLLLCMYGLS, IAGVIYLFLLSLVAIVVASLV, IIIVFSTAGAMFLISMLAGLL, FIIMMTLTGLALVIIVNAALM, RPIWIISCLMIVLWSGIISHG, and LYYYFIGFFGILAAIAITLVW.

It localises to the cell membrane. This is an uncharacterized protein from Escherichia coli (strain K12).